The sequence spans 172 residues: Adenine phosphoribosyltransferase (172 aa).

The protein belongs to the purine/pyrimidine phosphoribosyltransferase family. In terms of assembly, homodimer.

Its subcellular location is the cytoplasm. The catalysed reaction is AMP + diphosphate = 5-phospho-alpha-D-ribose 1-diphosphate + adenine. Its pathway is purine metabolism; AMP biosynthesis via salvage pathway; AMP from adenine: step 1/1. Catalyzes a salvage reaction resulting in the formation of AMP, that is energically less costly than de novo synthesis. This Rippkaea orientalis (strain PCC 8801 / RF-1) (Cyanothece sp. (strain PCC 8801)) protein is Adenine phosphoribosyltransferase.